Consider the following 528-residue polypeptide: Glucose transporter 1E (528 aa).

Residues 1-22 (MTERRDNVSHAPDAIEGPNDGA) form a disordered region. At 1–43 (MTERRDNVSHAPDAIEGPNDGAHAEETSPGFFSFENLGVAQVQ) the chain is on the cytoplasmic side. A helical membrane pass occupies residues 44 to 64 (VVGGTLNGYVIGYVAVYLLLY). The Extracellular portion of the chain corresponds to 65–118 (LTATECKFTTEGACGGRKIYGCKWSGTTCKFENPKCSEGSDPSDSCKNEVAYTS). A helical membrane pass occupies residues 119–139 (VYSGIFACAMIVGSMVGSIIA). Over 140-151 (GKCITTFGLKKS) the chain is Cytoplasmic. Residues 152–172 (FIIVSITCTIACVVVQVAIEY) traverse the membrane as a helical segment. Topologically, residues 173-175 (NNY) are extracellular. The helical transmembrane segment at 176–196 (YALCTGRVLIGLGVGILCSVF) threads the bilayer. Over 197–213 (PMYVNENAHPKLCKMDG) the chain is Cytoplasmic. The helical transmembrane segment at 214–234 (VLFQVFTTLGIMLAAMLGLIL) threads the bilayer. Residues 235–250 (DKTGASKEEANMAGRL) are Extracellular-facing. Residues 251-271 (HVFSAVPLGLSVAMFLVGMFL) traverse the membrane as a helical segment. At 272–301 (RESTATFAQDDDGKADGGMDPNEYGWGQML) the chain is on the cytoplasmic side. Residues 302 to 322 (WPLFMGAVTAGTLQLTGINAV) form a helical membrane-spanning segment. The Extracellular portion of the chain corresponds to 323–338 (MNYAPKITENLGMDPS). A helical transmembrane segment spans residues 339–359 (LGNFLVMAWNFVTSLVAIPLA). Over 360-367 (SRFTMRQM) the chain is Cytoplasmic. A helical transmembrane segment spans residues 368–388 (FITCSFVASCMCLFLCGIPVF). Residues 389–403 (PGVAEEKVKNGVATT) lie on the Extracellular side of the membrane. A helical transmembrane segment spans residues 404-424 (GIALFIAAFEFGVGSCFFVLA). The Cytoplasmic portion of the chain corresponds to 425–438 (QDLFPPSFRPKGSS). The chain crosses the membrane as a helical span at residues 439–459 (FVVMMQFIFNILINLLYPITT). The Extracellular portion of the chain corresponds to 460 to 475 (EAISGGATGDQDKGQA). A helical membrane pass occupies residues 476–496 (VVFILFGLIGLICFVLQFFYL). Residues 497–528 (YPYDANQDHENDHGTEPVERILSPVDVPTPRN) lie on the Cytoplasmic side of the membrane. The disordered stretch occupies residues 507-528 (NDHGTEPVERILSPVDVPTPRN).

It belongs to the major facilitator superfamily. Sugar transporter (TC 2.A.1.1) family.

Its subcellular location is the membrane. Facilitative glucose transporter. This Trypanosoma brucei brucei protein is Glucose transporter 1E (THT1E).